Consider the following 602-residue polypeptide: Threonine--tRNA ligase (602 aa).

Residues D208–P499 are catalytic. Zn(2+)-binding residues include C300, H351, and H476.

The protein belongs to the class-II aminoacyl-tRNA synthetase family. Homodimer. It depends on Zn(2+) as a cofactor.

The protein resides in the cytoplasm. The enzyme catalyses tRNA(Thr) + L-threonine + ATP = L-threonyl-tRNA(Thr) + AMP + diphosphate + H(+). Catalyzes the attachment of threonine to tRNA(Thr) in a two-step reaction: L-threonine is first activated by ATP to form Thr-AMP and then transferred to the acceptor end of tRNA(Thr). Also edits incorrectly charged L-seryl-tRNA(Thr). The protein is Threonine--tRNA ligase of Campylobacter jejuni subsp. jejuni serotype O:2 (strain ATCC 700819 / NCTC 11168).